A 338-amino-acid chain; its full sequence is MTALRLLVSDSHDPLFNLAVEECIFRQMDPNQRVLFLWRNANTVVIGRAQNPWKECNTRRMEEDGVTLARRSSGGGAVFHDLSNSCFIFMAGKPGYDKSISTAIALDALKLLGVSAFASGRNDLLVATQDGDRKVSGSAYRETHDRGFHHGTLLLDADLSRLANYLNPDPKKLAAKGISSVRSRVANLCELLPGIEHQQVSHALIEAFFAHYGARVSPEHISPTQLPDLPGFADTFARQRSWEWNFGHAPAFTHQLDERFDWGGVELHFDVEKGVIGRAQIFSDSLDPAPLDALAQRLVGVAYRSDAIAALFGQLKADFPARQAELDALAGWLQAALR.

Residues 29-216 enclose the BPL/LPL catalytic domain; it reads DPNQRVLFLW…AFFAHYGARV (188 aa). ATP is bound by residues arginine 71, 76–79, and lysine 134; that span reads GAVF. Lysine 134 is a (R)-lipoate binding site.

This sequence belongs to the LplA family. Monomer.

The protein resides in the cytoplasm. The catalysed reaction is L-lysyl-[lipoyl-carrier protein] + (R)-lipoate + ATP = N(6)-[(R)-lipoyl]-L-lysyl-[lipoyl-carrier protein] + AMP + diphosphate + H(+). It functions in the pathway protein modification; protein lipoylation via exogenous pathway; protein N(6)-(lipoyl)lysine from lipoate: step 1/2. Its pathway is protein modification; protein lipoylation via exogenous pathway; protein N(6)-(lipoyl)lysine from lipoate: step 2/2. In terms of biological role, catalyzes both the ATP-dependent activation of exogenously supplied lipoate to lipoyl-AMP and the transfer of the activated lipoyl onto the lipoyl domains of lipoate-dependent enzymes. The protein is Lipoate-protein ligase A of Aeromonas salmonicida (strain A449).